The chain runs to 335 residues: MPASQTFTLLLHKQRHRDKRHLLLLTLGVAVAFVFSLSAGDVWLWPSQWSGEAAQLFVWQLRLPRALAVMLVGASLAVAGAVMQSLFENPLAEPGLLGVANGAGVALVLTVLLGNGLLPVAFMSLSAIAGALVMTFLLLSFARRKRLTNARLLLVGVALGIVCSAVMTWAVYFSSSLDLRQLMYWMMGGFGGVDWRQKWLVLALLPVLLWLCCQGKALNFMALGEVQARQLGLSLHLWRNLLVLAIGWLVGVSVALAGVIGFVGLVIPHMLRLSGLTNQRYLLPGCALAGAGVLLAADVVARITLLSAELPIGVVTATLGAPLFIWLLTRVKSLR.

The next 9 helical transmembrane spans lie at Leu22–Val42, Leu67–Phe87, Pro94–Gly114, Leu117–Leu137, Leu153–Phe173, Leu200–Phe220, Val243–Val263, Tyr281–Ala301, and Ala308–Leu328.

This sequence belongs to the binding-protein-dependent transport system permease family. FecCD subfamily. As to quaternary structure, the complex is composed of two ATP-binding proteins (BtuD), two transmembrane proteins (BtuC) and a solute-binding protein (BtuF).

Its subcellular location is the cell inner membrane. Functionally, part of the ABC transporter complex BtuCDF involved in vitamin B12 import. Involved in the translocation of the substrate across the membrane. The protein is Vitamin B12 import system permease protein BtuC of Serratia proteamaculans (strain 568).